The following is a 210-amino-acid chain: NAD(P)H-quinone oxidoreductase subunit I (210 aa).

4Fe-4S ferredoxin-type domains are found at residues 54-83 (GRIH…VDWV) and 94-123 (YSYS…VTED). [4Fe-4S] cluster is bound by residues Cys-63, Cys-66, Cys-69, Cys-73, Cys-103, Cys-106, Cys-109, and Cys-113.

Belongs to the complex I 23 kDa subunit family. NDH-1 is composed of at least 11 different subunits. Requires [4Fe-4S] cluster as cofactor.

It is found in the cellular thylakoid membrane. The catalysed reaction is a plastoquinone + NADH + (n+1) H(+)(in) = a plastoquinol + NAD(+) + n H(+)(out). The enzyme catalyses a plastoquinone + NADPH + (n+1) H(+)(in) = a plastoquinol + NADP(+) + n H(+)(out). Its function is as follows. NDH-1 shuttles electrons from an unknown electron donor, via FMN and iron-sulfur (Fe-S) centers, to quinones in the respiratory and/or the photosynthetic chain. The immediate electron acceptor for the enzyme in this species is believed to be plastoquinone. Couples the redox reaction to proton translocation, and thus conserves the redox energy in a proton gradient. This is NAD(P)H-quinone oxidoreductase subunit I from Synechococcus sp. (strain JA-3-3Ab) (Cyanobacteria bacterium Yellowstone A-Prime).